The sequence spans 268 residues: Phosphatidylglycerol--prolipoprotein diacylglyceryl transferase (268 aa).

Helical transmembrane passes span 14 to 34 (IIFSLGPISLRWYGLMYLIGF), 60 to 80 (LLFNGFAGVFLGGRIGYVLFY), 95 to 115 (VWEGGMSFHGGLIGVIVAMLV), 124 to 144 (FWVVADFVAPLIPFGLGMGRI), 176 to 196 (SQLYEFVLEGIVLFCILNWFI), 203 to 223 (GSVAGLFLLFYGLFRFIVEFF), and 238 to 258 (ISMGQILSTPMILLGALFIVL). Arg143 serves as a coordination point for a 1,2-diacyl-sn-glycero-3-phospho-(1'-sn-glycerol).

This sequence belongs to the Lgt family.

It is found in the cell inner membrane. The catalysed reaction is L-cysteinyl-[prolipoprotein] + a 1,2-diacyl-sn-glycero-3-phospho-(1'-sn-glycerol) = an S-1,2-diacyl-sn-glyceryl-L-cysteinyl-[prolipoprotein] + sn-glycerol 1-phosphate + H(+). The protein operates within protein modification; lipoprotein biosynthesis (diacylglyceryl transfer). Functionally, catalyzes the transfer of the diacylglyceryl group from phosphatidylglycerol to the sulfhydryl group of the N-terminal cysteine of a prolipoprotein, the first step in the formation of mature lipoproteins. The polypeptide is Phosphatidylglycerol--prolipoprotein diacylglyceryl transferase (Mannheimia succiniciproducens (strain KCTC 0769BP / MBEL55E)).